The chain runs to 290 residues: Ribosomal RNA small subunit methyltransferase A (290 aa).

Asn-27, Leu-29, Gly-54, Glu-75, Asp-100, and Asn-125 together coordinate S-adenosyl-L-methionine.

Belongs to the class I-like SAM-binding methyltransferase superfamily. rRNA adenine N(6)-methyltransferase family. RsmA subfamily.

The protein resides in the cytoplasm. It carries out the reaction adenosine(1518)/adenosine(1519) in 16S rRNA + 4 S-adenosyl-L-methionine = N(6)-dimethyladenosine(1518)/N(6)-dimethyladenosine(1519) in 16S rRNA + 4 S-adenosyl-L-homocysteine + 4 H(+). Its function is as follows. Specifically dimethylates two adjacent adenosines (A1518 and A1519) in the loop of a conserved hairpin near the 3'-end of 16S rRNA in the 30S particle. May play a critical role in biogenesis of 30S subunits. The protein is Ribosomal RNA small subunit methyltransferase A of Streptococcus agalactiae serotype V (strain ATCC BAA-611 / 2603 V/R).